The chain runs to 119 residues: Basic phospholipase A2 DE-1 (119 aa).

Intrachain disulfides connect C11/C71, C26/C118, C28/C44, C43/C99, C50/C92, C60/C85, and C78/C90. 4 residues coordinate Ca(2+): Y27, G29, G31, and D48. D93 is an active-site residue.

It belongs to the phospholipase A2 family. Group I subfamily. D49 sub-subfamily. Ca(2+) serves as cofactor. Expressed by the venom gland.

The protein localises to the secreted. The catalysed reaction is a 1,2-diacyl-sn-glycero-3-phosphocholine + H2O = a 1-acyl-sn-glycero-3-phosphocholine + a fatty acid + H(+). Functionally, PLA2 catalyzes the calcium-dependent hydrolysis of the 2-acyl groups in 3-sn-phosphoglycerides. The polypeptide is Basic phospholipase A2 DE-1 (Hemachatus haemachatus (Rinkhals)).